Consider the following 353-residue polypeptide: Polycomb group RING finger protein 6 (353 aa).

Residues 1-116 are disordered; the sequence is MDEAETDATE…FSLRLESGRA (116 aa). Positions 9-19 are enriched in basic and acidic residues; it reads TENKRASEAKR. Residues 23–39 show a composition bias toward pro residues; it reads MPPPPPPPPPISPPALI. Ser34 bears the Phosphoserine mark. The segment covering 40-52 has biased composition (low complexity); that stretch reads PAPAAGEEGPASL. Positions 69–82 are enriched in basic and acidic residues; sequence EPERSLGRLRGRFE. Residues 71 to 112 are a coiled coil; sequence ERSLGRLRGRFEDYDEELEEEEEMEEEEEEEEEMSHFSLRLE. The segment covering 83 to 103 has biased composition (acidic residues); the sequence is DYDEELEEEEEMEEEEEEEEE. Ser118 carries the post-translational modification Phosphoserine. An RING-type zinc finger spans residues 137–176; that stretch reads CSICKGYLIDATTITECLHTFCKSCIVRHFYYSNRCPKCN. Residues Lys226 and Lys237 each participate in a glycyl lysine isopeptide (Lys-Gly) (interchain with G-Cter in SUMO2) cross-link.

As to quaternary structure, component of a PRC1-like complex. Interacts with BMI1/PCGF4, RING1 and RNF2. Interacts with KDM5D. Interacts with CBX4, CBX6, CBX7 and CBX8. In terms of processing, phosphorylated during mitosis. As to expression, expressed in ovary, testis, stomach, liver, thymus and kidney (at protein level).

It is found in the nucleus. In terms of biological role, transcriptional repressor. May modulate the levels of histone H3K4Me3 by activating KDM5D histone demethylase. Component of a Polycomb group (PcG) multiprotein PRC1-like complex, a complex class required to maintain the transcriptionally repressive state of many genes, including Hox genes, throughout development. PcG PRC1 complex acts via chromatin remodeling and modification of histones; it mediates monoubiquitination of histone H2A 'Lys-119', rendering chromatin heritably changed in its expressibility. Within the PRC1-like complex, regulates RNF2 ubiquitin ligase activity. The protein is Polycomb group RING finger protein 6 (Pcgf6) of Mus musculus (Mouse).